A 117-amino-acid chain; its full sequence is MTAELPPQIQNQIAQLQQIQQQIQALAMQKSQVEAMQKESKMALDELGRLADDAVVYRNVGELVIKTSKEESITKLKDREETLSLRLQSISRQEERLTSRFKQLQEQIQQALGPRAQ.

The protein belongs to the prefoldin subunit beta family. As to quaternary structure, heterohexamer of two alpha and four beta subunits.

It localises to the cytoplasm. Functionally, molecular chaperone capable of stabilizing a range of proteins. Seems to fulfill an ATP-independent, HSP70-like function in archaeal de novo protein folding. This is Prefoldin subunit beta from Methanosarcina barkeri (strain Fusaro / DSM 804).